The sequence spans 549 residues: Arginine-containing cyclodipeptide synthase amaA (549 aa).

Residues 445 to 449 (DDRAE) carry the Conserved DDXXE motif motif.

Belongs to the arginine-containing cyclodipeptide synthase family.

The enzyme catalyses L-prolyl-tRNA(Pro) + L-arginyl-tRNA(Arg) = cyclo(L-arginyl-L-prolyl) + tRNA(Pro) + tRNA(Arg) + 2 H(+). The protein operates within secondary metabolite biosynthesis. Its function is as follows. Arginine-containing cyclodipeptide synthase; part of the cluster that mediates the biosynthesis of a highly modified cyclo-arginine-proline dipeptide (cRP). Within the pathway, amaA acts as the scaffold-generating enzyme and is responsible for formation of the cyclo-Arg-Pro diketopiperazine (cRW) from L-arginyl-tRNA(Arg) + L-prolyl-tRNA(Pro). Additional enzymes from the cluster then further modify the cyclo-Arg-Pro diketopiperazine (cRW) scaffold. The sequence is that of Arginine-containing cyclodipeptide synthase amaA from Apiospora montagnei (Sphaeria apiospora).